Here is a 202-residue protein sequence, read N- to C-terminus: MSTLARTAHVTRQTSESTIDLQLDLDGTGASEISTSVPFYDHMLTAFAKHSLTDLRVTATGDTHIDVHHTVEDVGIVLGQAIREALGDKSGIARFGDALVPLDEALVQSVVDISGRPFLVHSGEPAGFEMHLIGGHFTGSMVRHVFEAITFHAGLTVHVTVLGGRDPHHIAEAEFKSFARAFRQAKELDPRVSGIPSTKGAL.

It belongs to the imidazoleglycerol-phosphate dehydratase family.

It localises to the cytoplasm. It catalyses the reaction D-erythro-1-(imidazol-4-yl)glycerol 3-phosphate = 3-(imidazol-4-yl)-2-oxopropyl phosphate + H2O. It participates in amino-acid biosynthesis; L-histidine biosynthesis; L-histidine from 5-phospho-alpha-D-ribose 1-diphosphate: step 6/9. The polypeptide is Imidazoleglycerol-phosphate dehydratase (Clavibacter michiganensis subsp. michiganensis (strain NCPPB 382)).